The following is a 264-amino-acid chain: 5'-nucleotidase SurE (264 aa).

A divalent metal cation-binding residues include D10, D11, S43, and N99.

It belongs to the SurE nucleotidase family. A divalent metal cation is required as a cofactor.

The protein localises to the cytoplasm. It catalyses the reaction a ribonucleoside 5'-phosphate + H2O = a ribonucleoside + phosphate. Functionally, nucleotidase that shows phosphatase activity on nucleoside 5'-monophosphates. The protein is 5'-nucleotidase SurE of Methanococcus maripaludis (strain C6 / ATCC BAA-1332).